Reading from the N-terminus, the 225-residue chain is UPF0173 metal-dependent hydrolase PYRAB05000 (225 aa).

The protein belongs to the UPF0173 family.

This is UPF0173 metal-dependent hydrolase PYRAB05000 from Pyrococcus abyssi (strain GE5 / Orsay).